The following is a 287-amino-acid chain: ATP synthase gamma chain (287 aa).

It belongs to the ATPase gamma chain family. In terms of assembly, F-type ATPases have 2 components, CF(1) - the catalytic core - and CF(0) - the membrane proton channel. CF(1) has five subunits: alpha(3), beta(3), gamma(1), delta(1), epsilon(1). CF(0) has three main subunits: a, b and c.

The protein resides in the cell inner membrane. Functionally, produces ATP from ADP in the presence of a proton gradient across the membrane. The gamma chain is believed to be important in regulating ATPase activity and the flow of protons through the CF(0) complex. The polypeptide is ATP synthase gamma chain (Citrobacter koseri (strain ATCC BAA-895 / CDC 4225-83 / SGSC4696)).